The sequence spans 497 residues: tRNA-2-methylthio-N(6)-dimethylallyladenosine synthase (497 aa).

The 118-residue stretch at 44–161 (KKVFVTTQGC…LPELYDQSHQ (118 aa)) folds into the MTTase N-terminal domain. Residues C53, C90, C124, C205, C209, and C212 each contribute to the [4Fe-4S] cluster site. Residues 191–423 (RVEGFKAFVS…QKVIIDSTLA (233 aa)) enclose the Radical SAM core domain. A TRAM domain is found at 426–494 (HEMVGTTTRV…PHMVKGEIEA (69 aa)).

It belongs to the methylthiotransferase family. MiaB subfamily. Monomer. It depends on [4Fe-4S] cluster as a cofactor.

The protein resides in the cytoplasm. It carries out the reaction N(6)-dimethylallyladenosine(37) in tRNA + (sulfur carrier)-SH + AH2 + 2 S-adenosyl-L-methionine = 2-methylsulfanyl-N(6)-dimethylallyladenosine(37) in tRNA + (sulfur carrier)-H + 5'-deoxyadenosine + L-methionine + A + S-adenosyl-L-homocysteine + 2 H(+). Its function is as follows. Catalyzes the methylthiolation of N6-(dimethylallyl)adenosine (i(6)A), leading to the formation of 2-methylthio-N6-(dimethylallyl)adenosine (ms(2)i(6)A) at position 37 in tRNAs that read codons beginning with uridine. This chain is tRNA-2-methylthio-N(6)-dimethylallyladenosine synthase, found in Psychrobacter cryohalolentis (strain ATCC BAA-1226 / DSM 17306 / VKM B-2378 / K5).